We begin with the raw amino-acid sequence, 287 residues long: Aromatic amino acid exporter YddG (287 aa).

Over 1-5 (MSRSS) the chain is Cytoplasmic. A helical transmembrane segment spans residues 6 to 24 (ATLIGFTAILLWSTLALAT). Residues 7-136 (TLIGFTAILL…MGLAGTVVLL (130 aa)) enclose the EamA 1 domain. At 25 to 31 (SSTGAVP) the chain is on the periplasmic side. The helical transmembrane segment at 32–54 (PFLLTALTFTIGGAVGIAAGLAR) threads the bilayer. The Cytoplasmic segment spans residues 55–65 (GVGLSVLRQPW). The helical transmembrane segment at 66-86 (PVWVHGIGGLFGYHFFYFSAL) threads the bilayer. The Periplasmic segment spans residues 87-90 (KLAP). The chain crosses the membrane as a helical span at residues 91–111 (PAEAGLVAYLWPLLIVLFSAF). The Cytoplasmic portion of the chain corresponds to 112–118 (LPGERLR). Residues 119-139 (PAHVAGALMGLAGTVVLLGAR) traverse the membrane as a helical segment. Residues 140-149 (AGGFGFAPEY) lie on the Periplasmic side of the membrane. The helical transmembrane segment at 150 to 170 (VPGYLAAAACAVIWSVYSVAS) threads the bilayer. An EamA 2 domain is found at 151–281 (PGYLAAAACA…ALIVGGAAVA (131 aa)). Topologically, residues 171–176 (RRFARV) are cytoplasmic. Residues 177 to 198 (PTEVVAGFCLATAALSALCHIL) form a helical membrane-spanning segment. Residues 199–208 (FEPSVWPVGS) lie on the Periplasmic side of the membrane. A helical transmembrane segment spans residues 209-233 (EWLAVVALGIGPVGIAFYTWDIGMK). Over 234–236 (RGD) the chain is Cytoplasmic. The chain crosses the membrane as a helical span at residues 237 to 258 (VRLLGVLSYAAPVLSTLLLVVA). The Periplasmic segment spans residues 259 to 264 (GFAAPS). A helical transmembrane segment spans residues 265–284 (GALAIACALIVGGAAVATLL). Topologically, residues 285–287 (ARR) are cytoplasmic.

This sequence belongs to the drug/metabolite transporter (DMT) superfamily. Aromatic amino acid/paraquat exporter (ArAA/P-E) (TC 2.A.7.17) family.

The protein localises to the cell inner membrane. It catalyses the reaction L-threonine(in) = L-threonine(out). The catalysed reaction is L-methionine(in) = L-methionine(out). It carries out the reaction L-lysine(in) = L-lysine(out). The enzyme catalyses L-glutamate(out) = L-glutamate(in). Its function is as follows. Amino acid transporter with broad substrate specificity. Can transport various amino acids, including L-threonine, L-methionine, L-lysine and L-glutamate. This Ancylobacter novellus (strain ATCC 8093 / DSM 506 / JCM 20403 / CCM 1077 / IAM 12100 / NBRC 12443 / NCIMB 10456) (Starkeya novella) protein is Aromatic amino acid exporter YddG.